The following is a 352-amino-acid chain: tRNA-specific 2-thiouridylase MnmA (352 aa).

Residues 7–14 (GLSGGVDS) and Leu-33 contribute to the ATP site. The active-site Nucleophile is the Cys-94. A disulfide bond links Cys-94 and Cys-193. Gly-119 provides a ligand contact to ATP. The interaction with tRNA stretch occupies residues 143–145 (KDQ). The Cysteine persulfide intermediate role is filled by Cys-193. The interval 298 to 299 (RY) is interaction with tRNA.

The protein belongs to the MnmA/TRMU family.

The protein localises to the cytoplasm. The enzyme catalyses S-sulfanyl-L-cysteinyl-[protein] + uridine(34) in tRNA + AH2 + ATP = 2-thiouridine(34) in tRNA + L-cysteinyl-[protein] + A + AMP + diphosphate + H(+). Functionally, catalyzes the 2-thiolation of uridine at the wobble position (U34) of tRNA, leading to the formation of s(2)U34. This chain is tRNA-specific 2-thiouridylase MnmA, found in Microcystis aeruginosa (strain NIES-843 / IAM M-2473).